Here is a 1372-residue protein sequence, read N- to C-terminus: Disease resistance protein RRS1B (1372 aa).

The TIR domain occupies 2–137 (TESEQIVYIS…ETVRDVYEKL (136 aa)). The region spanning 166-417 (VGIWGMPGIG…GCGFFPHVGI (252 aa)) is the NB-ARC domain. 170-177 (GMPGIGKT) is an ATP binding site. One copy of the LRR 1 repeat lies at 491 to 515 (PEEIEGMFLDTSNLSFDIKHVAFDN). The stretch at 528–544 (NPEVHHVNNFLKGSLSS) is one LRR 2; degenerate repeat. LRR repeat units lie at residues 545–568 (LPNVLRLLHWENYPLQFLPQNFDP), 570–591 (HLVEINMPYSQLKKLWGGTKDL), 614–637 (AQNLEVVDLQGCTRLQSFPATGQL), 638–658 (LHLRVVNLSGCTEIKSFPEIP), 659–681 (PNIETLNLQGTGIIELPLSIVKP), 693–718 (IPGLSGVSNLEQSDLKPLTSLMKIST), 723–747 (PGKLSCLELNDCSRLRSLPNMVNLE), 749–767 (LKALDLSGCSELETIQGFP), 768–792 (RNLKELYLVGTAVRQVPQLPQSLEF), and 798–823 (CVSLKSIRLDFKKLPVHYTFSNCFDL). The short motif at 950-964 (INLHCWALGKAVERD) is the Nuclear localization signal element. The segment at residues 1174-1240 (DRGSRSSDLW…YISEHNHPFP (67 aa)) is a DNA-binding region (WRKY). Disordered regions lie at residues 1246–1288 (LAGS…ASPP) and 1337–1372 (QTMFLSRRSSGGNMEAQGKNSSDDREVNLPSKILNR). The segment covering 1249–1269 (STRSSSSKCSDVTTSASSTVS) has biased composition (low complexity). The span at 1270-1279 (QDKEGPDKSH) shows a compositional bias: basic and acidic residues. Residues 1337-1348 (QTMFLSRRSSGG) show a composition bias toward polar residues.

The protein belongs to the disease resistance TIR-NB-LRR family. In terms of assembly, interacts with RPS4B. RPS4B-RRS1B heterodimer interacts with the bacterial effectors AvrRps4 and PopP2.

It localises to the nucleus. Transcription factor. Interacts specifically with the W box (5'-(T)TGAC[CT]-3'), a frequently occurring elicitor-responsive cis-acting element. Also acts as a disease resistance protein that specifically recognizes the AvrRps4 type III effector avirulence protein from P.syringae. Heterodimerization with RPS4B is required to form a functional complex to recognize AvrRps4 and to mediate the hypersensitive response. This chain is Disease resistance protein RRS1B, found in Arabidopsis thaliana (Mouse-ear cress).